Reading from the N-terminus, the 528-residue chain is Exodeoxyribonuclease 7 large subunit (528 aa).

A disordered region spans residues 486 to 528; the sequence is QGDRDAVIDGESSGVLPPSAAPAPTRPTPRPKPASSSDQGSLF. Over residues 504-517 the composition is skewed to pro residues; that stretch reads SAAPAPTRPTPRPK.

Belongs to the XseA family. As to quaternary structure, heterooligomer composed of large and small subunits.

It localises to the cytoplasm. It catalyses the reaction Exonucleolytic cleavage in either 5'- to 3'- or 3'- to 5'-direction to yield nucleoside 5'-phosphates.. Bidirectionally degrades single-stranded DNA into large acid-insoluble oligonucleotides, which are then degraded further into small acid-soluble oligonucleotides. The chain is Exodeoxyribonuclease 7 large subunit from Caulobacter sp. (strain K31).